The chain runs to 100 residues: Urease subunit gamma (100 aa).

It belongs to the urease gamma subunit family. In terms of assembly, heterotrimer of UreA (gamma), UreB (beta) and UreC (alpha) subunits. Three heterotrimers associate to form the active enzyme.

It is found in the cytoplasm. The catalysed reaction is urea + 2 H2O + H(+) = hydrogencarbonate + 2 NH4(+). Its pathway is nitrogen metabolism; urea degradation; CO(2) and NH(3) from urea (urease route): step 1/1. This Polynucleobacter asymbioticus (strain DSM 18221 / CIP 109841 / QLW-P1DMWA-1) (Polynucleobacter necessarius subsp. asymbioticus) protein is Urease subunit gamma.